Here is a 381-residue protein sequence, read N- to C-terminus: S-(hydroxymethyl)glutathione dehydrogenase (381 aa).

Cys-49 contacts Zn(2+). An NAD(+)-binding site is contributed by His-50. Residues His-71, Glu-72, Cys-101, Cys-104, Cys-107, Cys-115, and Cys-178 each contribute to the Zn(2+) site. NAD(+) is bound by residues 203–208 (GGGIVG), Asp-227, and 298–300 (IGV).

This sequence belongs to the zinc-containing alcohol dehydrogenase family. Class-III subfamily. Zn(2+) serves as cofactor.

It carries out the reaction a primary alcohol + NAD(+) = an aldehyde + NADH + H(+). It catalyses the reaction a secondary alcohol + NAD(+) = a ketone + NADH + H(+). The catalysed reaction is S-(hydroxymethyl)glutathione + NADP(+) = S-formylglutathione + NADPH + H(+). The enzyme catalyses S-(hydroxymethyl)glutathione + NAD(+) = S-formylglutathione + NADH + H(+). It carries out the reaction S-nitrosoglutathione + NADH + H(+) = S-(hydroxysulfenamide)glutathione + NAD(+). Its function is as follows. Oxidizes long-chain alcohols and, in the presence of glutathione, is able to oxidize formaldehyde. Also acts as a S-nitroso-glutathione reductase by catalyzing the NADH-dependent reduction of S-nitrosoglutathione, thereby regulating protein S-nitrosylation. This Candida maltosa (Yeast) protein is S-(hydroxymethyl)glutathione dehydrogenase (FDH1).